The chain runs to 243 residues: ATP synthase subunit b, mitochondrial (243 aa).

The protein belongs to the eukaryotic ATPase B chain family. In terms of assembly, F-type ATPases have 2 components, CF(1) - the catalytic core - and CF(0) - the membrane proton channel. CF(1) has five subunits: alpha(3), beta(3), gamma(1), delta(1), epsilon(1). CF(0) has three main subunits: a, b and c.

The protein resides in the mitochondrion. It localises to the mitochondrion inner membrane. Functionally, mitochondrial membrane ATP synthase (F(1)F(0) ATP synthase or Complex V) produces ATP from ADP in the presence of a proton gradient across the membrane which is generated by electron transport complexes of the respiratory chain. F-type ATPases consist of two structural domains, F(1) - containing the extramembraneous catalytic core, and F(0) - containing the membrane proton channel, linked together by a central stalk and a peripheral stalk. During catalysis, ATP synthesis in the catalytic domain of F(1) is coupled via a rotary mechanism of the central stalk subunits to proton translocation. Part of the complex F(0) domain and the peripheric stalk, which acts as a stator to hold the catalytic alpha(3)beta(3) subcomplex and subunit a/ATP6 static relative to the rotary elements. This chain is ATP synthase subunit b, mitochondrial, found in Drosophila melanogaster (Fruit fly).